Here is a 616-residue protein sequence, read N- to C-terminus: Coagulation factor XII (616 aa).

Residues 1–19 form the signal peptide; the sequence is MRALLLLGILLVSLESALL. The 49-residue stretch at 42-90 folds into the Fibronectin type-II domain; it reads VTGEPCHFPFQYYRQLYYKCIQRGQRGPRPWCATTPNFEKDQRWAYCLE. Cystine bridges form between cysteine 47-cysteine 73, cysteine 61-cysteine 88, cysteine 98-cysteine 110, cysteine 104-cysteine 119, cysteine 121-cysteine 130, cysteine 135-cysteine 163, cysteine 161-cysteine 170, cysteine 178-cysteine 189, cysteine 183-cysteine 198, cysteine 200-cysteine 209, cysteine 217-cysteine 295, cysteine 238-cysteine 277, and cysteine 266-cysteine 290. One can recognise an EGF-like 1 domain in the interval 94–131; sequence VKDHCNKGNPCQKGGTCVNMPNGPHCICPDHFTGKHCQ. O-linked (Fuc) threonine glycosylation occurs at threonine 109. Residues 133-173 form the Fibronectin type-I domain; sequence EKCFEPQFLQFFQENEIWHRFEPAGVSKCQCKGPKAQCKPV. Positions 174–210 constitute an EGF-like 2 domain; it reads ASQVCSTNPCLNGGSCLQTEGHRLCRCPTGYAGRLCD. The Kringle domain maps to 216-295; sequence RCYSDRGLSY…SWQYCRLARC (80 aa). N-linked (GlcNAc...) asparagine glycans are attached at residues asparagine 249, asparagine 271, and asparagine 335. The tract at residues 303–342 is disordered; it reads PPILTPTQSPSEHQDSPLLSREPQPTTQTPSQNLTSAWCA. Residues 325-338 show a composition bias toward polar residues; the sequence is PQPTTQTPSQNLTS. Intrachain disulfides connect cysteine 358/cysteine 485, cysteine 396/cysteine 412, cysteine 404/cysteine 474, cysteine 435/cysteine 438, cysteine 501/cysteine 570, cysteine 533/cysteine 549, and cysteine 560/cysteine 591. Positions 372-615 constitute a Peptidase S1 domain; it reads IVGGLVALPG…YLAWIQEHTT (244 aa). Histidine 411 serves as the catalytic Charge relay system. Residue asparagine 432 is glycosylated (N-linked (GlcNAc...) asparagine). Aspartate 460 functions as the Charge relay system in the catalytic mechanism. The Charge relay system role is filled by serine 564.

Belongs to the peptidase S1 family. In terms of assembly, interacts with HRG; the interaction, which is enhanced in the presence of zinc ions and inhibited by heparin-binding, inhibits factor XII autoactivation and contact-initiated coagulation. In terms of processing, O- and N-glycosylated.

The protein resides in the secreted. The enzyme catalyses Selective cleavage of Arg-|-Ile bonds in factor VII to form factor VIIa and factor XI to form factor XIa.. Activity is promoted in the presence of negatively charged surfaces. Functionally, factor XII is a serum glycoprotein that participates in the initiation of blood coagulation, fibrinolysis, and the generation of bradykinin and angiotensin. Prekallikrein is cleaved by factor XII to form kallikrein, which then cleaves factor XII first to alpha-factor XIIa and then trypsin cleaves it to beta-factor XIIa. Alpha-factor XIIa activates factor XI to factor XIa. The chain is Coagulation factor XII (F12) from Sus scrofa (Pig).